A 462-amino-acid polypeptide reads, in one-letter code: Probable peptidoglycan glycosyltransferase FtsW (462 aa).

Residues 1 to 63 (MGCIVCSDGI…VRDGRKFDAP (63 aa)) lie on the Cytoplasmic side of the membrane. Residues 64–84 (LLWMVVLMTAFGLLMIYSASV) traverse the membrane as a helical segment. Residues 85–97 (YLASKEGGDQFFY) are Periplasmic-facing. The chain crosses the membrane as a helical span at residues 98-118 (LTRQAGFVVAGLIASGFLWFL). Residues 119 to 125 (CRMRTWR) lie on the Cytoplasmic side of the membrane. The chain crosses the membrane as a helical span at residues 126–146 (RLVPWIFALSGLLLVAVLIAG). Topologically, residues 147-160 (REINGATRWIPLGP) are periplasmic. Residues 161–181 (LNFQPTELFKLAVILYLASLF) form a helical membrane-spanning segment. At 182 to 227 (TRREEVLRSMESLGWQSIWRGTANLIMSATNPQARRETLEMYGRFR) the chain is on the cytoplasmic side. 2 helical membrane passes run 228-248 (AIIL…VQPD) and 249-269 (FGSF…AGLP). The Cytoplasmic segment spans residues 270–271 (WK). A helical membrane pass occupies residues 272 to 292 (YFFVLVGSVLGGMVLMITAAP). Residues 293-348 (YRVQRVVAFLDPWKDPQGAGYQLTHSLMAIGRGEWFGMGLGASLSKRGFLPEAHTD) are Periplasmic-facing. Residues 349–369 (FIFAIIAEEFGFFGMCVLIFC) traverse the membrane as a helical segment. Residues 370 to 386 (YGWLVVRAFSIGKQSRD) are Cytoplasmic-facing. The chain crosses the membrane as a helical span at residues 387-409 (LGLTFNAYIASGIGIWIGIQSFF). At 410–424 (NIGVNIGALPTKGLT) the chain is on the periplasmic side. Residues 425-445 (LPLMSYGGSSVFFMLISMMLL) traverse the membrane as a helical segment. At 446-462 (LRIDYENRRKMRGYRVE) the chain is on the cytoplasmic side.

It belongs to the SEDS family. FtsW subfamily.

It is found in the cell inner membrane. It carries out the reaction [GlcNAc-(1-&gt;4)-Mur2Ac(oyl-L-Ala-gamma-D-Glu-L-Lys-D-Ala-D-Ala)](n)-di-trans,octa-cis-undecaprenyl diphosphate + beta-D-GlcNAc-(1-&gt;4)-Mur2Ac(oyl-L-Ala-gamma-D-Glu-L-Lys-D-Ala-D-Ala)-di-trans,octa-cis-undecaprenyl diphosphate = [GlcNAc-(1-&gt;4)-Mur2Ac(oyl-L-Ala-gamma-D-Glu-L-Lys-D-Ala-D-Ala)](n+1)-di-trans,octa-cis-undecaprenyl diphosphate + di-trans,octa-cis-undecaprenyl diphosphate + H(+). It functions in the pathway cell wall biogenesis; peptidoglycan biosynthesis. Functionally, peptidoglycan polymerase that is essential for cell division. The sequence is that of Probable peptidoglycan glycosyltransferase FtsW from Neisseria gonorrhoeae (strain NCCP11945).